The chain runs to 750 residues: E3 ubiquitin-protein ligase rfwd3.S (750 aa).

Residues 92–206 (RQAAEQRSSV…GAAPPAEPAP (115 aa)) form a disordered region. Basic residues predominate over residues 105 to 116 (RVQRRSTRRHQR). Residues 122-144 (TAGTSSRAALSNFFQINRTQGVA) are compositionally biased toward polar residues. Residues 168–181 (SSDETVELSEEEEG) are compositionally biased toward acidic residues. The segment at 263 to 307 (CAICFEPWTNAGQHRLSALRCGHLFGFTCIERWLKGGAAKCPQCN) adopts an RING-type; degenerate zinc-finger fold. Over residues 387-405 (TSMQASSSRSTISGSLSSS) the composition is skewed to low complexity. A disordered region spans residues 387-406 (TSMQASSSRSTISGSLSSSQ). 3 WD repeats span residues 470–510 (IHSK…VVQT), 512–552 (NTGR…NCVQ), and 558–603 (GSRC…YRPH).

Requires [4Fe-4S] cluster as cofactor.

It is found in the nucleus. It localises to the PML body. The protein localises to the cytoplasm. The enzyme catalyses S-ubiquitinyl-[E2 ubiquitin-conjugating enzyme]-L-cysteine + [acceptor protein]-L-lysine = [E2 ubiquitin-conjugating enzyme]-L-cysteine + N(6)-ubiquitinyl-[acceptor protein]-L-lysine.. The protein operates within protein modification; protein ubiquitination. Its function is as follows. E3 ubiquitin-protein ligase required for the repair of DNA interstrand cross-links (ICL) in response to DNA damage. Plays a key role in RPA-mediated DNA damage signaling and repair. Required to translesion DNA synthesis across DNA-protein cross-link adducts by catalyzing ubiquitination of proteins on single-stranded DNA (ssDNA). Mediates ubiquitination of the hmces DNA-protein cross-link, possibly promoting its degradation. The chain is E3 ubiquitin-protein ligase rfwd3.S (rfwd3.S) from Xenopus laevis (African clawed frog).